An 896-amino-acid polypeptide reads, in one-letter code: Putative mannosylglycerate hydrolase (896 aa).

Residues histidine 12, aspartate 14, aspartate 125, and histidine 348 each contribute to the a divalent metal cation site. The Nucleophile role is filled by aspartate 125.

It belongs to the glycosyl hydrolase 38 family. A divalent metal cation is required as a cofactor.

The catalysed reaction is (2R)-2-O-(6-phospho-alpha-D-mannosyl)-glycerate + H2O = alpha-D-mannose 6-phosphate + (R)-glycerate. In terms of biological role, may hydrolyze 6-phospho-mannosyl-D-glycerate to mannose-6-phosphate and glycerate. This is Putative mannosylglycerate hydrolase (mngB) from Halalkalibacterium halodurans (strain ATCC BAA-125 / DSM 18197 / FERM 7344 / JCM 9153 / C-125) (Bacillus halodurans).